Reading from the N-terminus, the 82-residue chain is Small ribosomal subunit protein bS16 (82 aa).

It belongs to the bacterial ribosomal protein bS16 family.

This Haemophilus ducreyi (strain 35000HP / ATCC 700724) protein is Small ribosomal subunit protein bS16.